We begin with the raw amino-acid sequence, 166 residues long: Ribosome maturation factor RimM (166 aa).

Positions 90 to 163 (EGEFLVSQII…TVTIELLEGL (74 aa)) constitute a PRC barrel domain.

Belongs to the RimM family. In terms of assembly, binds ribosomal protein uS19.

The protein localises to the cytoplasm. Functionally, an accessory protein needed during the final step in the assembly of 30S ribosomal subunit, possibly for assembly of the head region. Essential for efficient processing of 16S rRNA. May be needed both before and after RbfA during the maturation of 16S rRNA. It has affinity for free ribosomal 30S subunits but not for 70S ribosomes. The chain is Ribosome maturation factor RimM from Oenococcus oeni (strain ATCC BAA-331 / PSU-1).